Reading from the N-terminus, the 98-residue chain is NADH-ubiquinone oxidoreductase chain 4L (98 aa).

The next 3 membrane-spanning stretches (helical) occupy residues 1–21 (MMSI…GVLI), 28–48 (STLL…ALLI), and 59–79 (APLI…ALLV).

This sequence belongs to the complex I subunit 4L family. In terms of assembly, core subunit of respiratory chain NADH dehydrogenase (Complex I) which is composed of 45 different subunits.

The protein resides in the mitochondrion inner membrane. The catalysed reaction is a ubiquinone + NADH + 5 H(+)(in) = a ubiquinol + NAD(+) + 4 H(+)(out). Functionally, core subunit of the mitochondrial membrane respiratory chain NADH dehydrogenase (Complex I) which catalyzes electron transfer from NADH through the respiratory chain, using ubiquinone as an electron acceptor. Part of the enzyme membrane arm which is embedded in the lipid bilayer and involved in proton translocation. In Osphranter robustus (Wallaroo), this protein is NADH-ubiquinone oxidoreductase chain 4L (MT-ND4L).